The primary structure comprises 165 residues: Protein NKG7 (165 aa).

The next 4 membrane-spanning stretches (helical) occupy residues 9-29, 61-81, 92-112, and 133-153; these read LLTS…NFWF, FCIL…MSCI, IVST…MTVY, and FYLG…SLGA.

It belongs to the PMP-22/EMP/MP20 family.

The protein localises to the cell membrane. It is found in the cytolytic granule membrane. Regulates cytotoxic granule exocytosis in effector lymphocytes, thus acting as a critical mediator of inflammation in a broad range of infectious and non-infectious diseases. Essential for cytotoxic degranulation of natural killer (NK) cells and CD8(+) T-cells and for the activation of CD4(+) T-cells following infection. Plays a critical role in CD8(+) T-cell and NK cell-mediated cytolysis of target cells and contributes to the cytolytic activity via the perforin/granzyme pathway by enhancing exocytosis of LAMP1-carrying lytic granules. Contributes to NK cell-mediated control of cancer metastasis. This chain is Protein NKG7 (NKG7), found in Bos taurus (Bovine).